The following is a 309-amino-acid chain: Mitochondrial glycine transporter (309 aa).

Solcar repeat units follow at residues 2 to 94, 124 to 207, and 219 to 304; these read SNVG…LRAL, LTSQ…IKHE, and QATL…GLML. 6 helical membrane-spanning segments follow: residues 8–33, 69–95, 130–155, 182–205, 223–249, and 279–297; these read LLSGGLSGLATTVCLQPFDLLKTRLQ, GTTPSLVRNVPGVALYMTSLTQLRALM, LIAGATTRVGVGFLLNPFSVLKARFE, GFLASSLRDAPYAGLFVVFYEGIK, IHGLSAASAGAIATMATHPFDVIKTKI, and GASLRMSRKVLSSAIGWAV.

Belongs to the mitochondrial carrier (TC 2.A.29) family. SLC25A38 subfamily.

Its subcellular location is the mitochondrion inner membrane. The catalysed reaction is glycine(in) = glycine(out). In terms of biological role, mitochondrial glycine transporter that imports glycine into the mitochondrial matrix. Plays an important role in providing glycine for the first enzymatic step in heme biosynthesis, the condensation of glycine with succinyl-CoA to produce 5-aminolevulinate (ALA) in the mitochondrial matrix. The chain is Mitochondrial glycine transporter from Laccaria bicolor (strain S238N-H82 / ATCC MYA-4686) (Bicoloured deceiver).